Consider the following 246-residue polypeptide: UPF0309 protein ABC0887 (246 aa).

Residues 33–212 (MVHAIKEGKS…VLKMIEQLEE (180 aa)) form the SIS domain.

It belongs to the UPF0309 family.

The protein is UPF0309 protein ABC0887 of Shouchella clausii (strain KSM-K16) (Alkalihalobacillus clausii).